Reading from the N-terminus, the 2273-residue chain is Linear gramicidin synthase subunit A (2273 aa).

The interval 1–144 (MRILFLTTFM…AIEELFIREW (144 aa)) is GART. Carrier domains are found at residues 693-767 (APTD…TEQK) and 1724-1798 (APRT…TSEQ). Ser-728 and Ser-1759 each carry O-(pantetheine 4'-phosphoryl)serine.

It belongs to the ATP-dependent AMP-binding enzyme family. Large multienzyme complex composed of 4 subunits; LgrA, LgrB, LgrC and LgrD. Requires pantetheine 4'-phosphate as cofactor.

Its function is as follows. Activates valine (or leucine, but much less frequently), and then glycine and catalyzes the formation of the peptide bond in the first step of peptide synthesis. This enzyme may also play a role in N-formylation of the first amino acid residue in the synthesized dipeptide. This is Linear gramicidin synthase subunit A (lgrA) from Brevibacillus parabrevis.